A 527-amino-acid chain; its full sequence is Cytochrome P450 monooxyhenase eriA (527 aa).

The helical transmembrane segment at Leu-17 to Phe-37 threads the bilayer. 3 N-linked (GlcNAc...) asparagine glycosylation sites follow: Asn-77, Asn-274, and Asn-297. Cys-453 lines the heme pocket.

This sequence belongs to the cytochrome P450 family. Requires heme as cofactor.

It is found in the membrane. It carries out the reaction cyathadiol + reduced [NADPH--hemoprotein reductase] + O2 = cyathatriol + oxidized [NADPH--hemoprotein reductase] + H2O + H(+). It participates in secondary metabolite biosynthesis. Its function is as follows. Cytochrome P450 monooxygenase; part of the gene cluster that mediates the biosynthesis of erinacines, cyathane-xylosides that show unique biological activities, including leishmanicidal activity, stimulating activity for nerve growth-factor synthesis, and agonistic activity toward the kappa opioid receptor. Within the pathway, eriA catalyzes C-11 hydroxylation in the presence of the short chain dehydrogenase/reductase (SDR) eriH, which leads to the production of cyathatriol. The first step of the erinacines biosynthesis pathway is catalyzed by the geranylgeranyl diphosphate (GGPP) synthase eriE via conversion of farnesyl pyrophosphate and isopentyl pyrophosphate into geranylgeranyl pyrophosphate (GGPP). GGPP is then substrate of the diterpene cyclase eriG for the production of cyatha-3,12-diene. The cytochrome P450 monooxygenase eriI then hydroxylates cyatha-3,12-diene at C-14 of the seven-membered ring to produce erinacol, which is further hydroxylated at C-15 by the cytochrome P450 monooxygenase eriC to yield cyathadiol. The cytochrome P450 monooxygenase eriA then catalyzes C-11 hydroxylation in the presence of the short chain dehydrogenase/reductase (SDR) eriH, which leads to the production of cyathatriol. The acetyltransferase eriL converts cyathatriol into 11-O-acetyl-cyathatriol. The SDR eriH catalyzes further oxidation of 11-O-acetyl-cyathatriol into 1-O-acetylcyathin A3. Finally, the glycosyl transferase eriJ tranfers xylose from UDP-xylose onto C-14 of 11-O-acetyl-cyathatriol to form eracine Q. EriJ is also able to convert 11-O-acetyl-cyathatriol to eracine Q2 by using UDP-D-glucose as cosubstrate, but at a lower rate. The sequence is that of Cytochrome P450 monooxyhenase eriA from Hericium erinaceus (Lion's mane mushroom).